We begin with the raw amino-acid sequence, 878 residues long: DNA mismatch repair protein MutS (878 aa).

618-625 contacts ATP; the sequence is GPNMGGKS. 2 stretches are compositionally biased toward basic and acidic residues: residues 800–811 and 863–878; these read LEEESSRQRAEP and GADK…ARSR. 2 disordered regions span residues 800–842 and 859–878; these read LEEE…PDEL and SGEE…ARSR.

This sequence belongs to the DNA mismatch repair MutS family.

Functionally, this protein is involved in the repair of mismatches in DNA. It is possible that it carries out the mismatch recognition step. This protein has a weak ATPase activity. The sequence is that of DNA mismatch repair protein MutS from Alkalilimnicola ehrlichii (strain ATCC BAA-1101 / DSM 17681 / MLHE-1).